A 151-amino-acid polypeptide reads, in one-letter code: Small ribosomal subunit protein uS19 (151 aa).

An N-acetylalanine modification is found at Ala2.

This sequence belongs to the universal ribosomal protein uS19 family.

Functionally, negatively regulates lifespan. This chain is Small ribosomal subunit protein uS19, found in Caenorhabditis elegans.